The sequence spans 466 residues: ATP synthase subunit beta (466 aa).

Residue 153–160 participates in ATP binding; that stretch reads GGAGVGKT.

Belongs to the ATPase alpha/beta chains family. As to quaternary structure, F-type ATPases have 2 components, CF(1) - the catalytic core - and CF(0) - the membrane proton channel. CF(1) has five subunits: alpha(3), beta(3), gamma(1), delta(1), epsilon(1). CF(0) has three main subunits: a(1), b(2) and c(9-12). The alpha and beta chains form an alternating ring which encloses part of the gamma chain. CF(1) is attached to CF(0) by a central stalk formed by the gamma and epsilon chains, while a peripheral stalk is formed by the delta and b chains.

Its subcellular location is the cell membrane. The catalysed reaction is ATP + H2O + 4 H(+)(in) = ADP + phosphate + 5 H(+)(out). Produces ATP from ADP in the presence of a proton gradient across the membrane. The catalytic sites are hosted primarily by the beta subunits. This chain is ATP synthase subunit beta, found in Leuconostoc citreum (strain KM20).